The following is a 286-amino-acid chain: Isopentenyl-diphosphate Delta-isomerase II (286 aa).

In terms of domain architecture, Nudix hydrolase spans 104-256; sequence MLHRAFSVFL…GLKLSPWFRL (153 aa). Residues Cys141 and Glu203 contribute to the active site.

Belongs to the IPP isomerase type 1 family.

The catalysed reaction is isopentenyl diphosphate = dimethylallyl diphosphate. The protein operates within isoprenoid biosynthesis; dimethylallyl diphosphate biosynthesis; dimethylallyl diphosphate from isopentenyl diphosphate: step 1/1. It functions in the pathway porphyrin-containing compound metabolism; chlorophyll biosynthesis. Its function is as follows. Catalyzes the 1,3-allylic rearrangement of the homoallylic substrate isopentenyl (IPP) to its highly electrophilic allylic isomer, dimethylallyl diphosphate (DMAPP). This chain is Isopentenyl-diphosphate Delta-isomerase II (IPI2), found in Clarkia breweri (Fairy fans).